We begin with the raw amino-acid sequence, 156 residues long: ATP synthase subunit b (156 aa).

A helical transmembrane segment spans residues 12–32 (VAFFIFVIFCMKFVWPPVIAA).

The protein belongs to the ATPase B chain family. As to quaternary structure, F-type ATPases have 2 components, F(1) - the catalytic core - and F(0) - the membrane proton channel. F(1) has five subunits: alpha(3), beta(3), gamma(1), delta(1), epsilon(1). F(0) has three main subunits: a(1), b(2) and c(10-14). The alpha and beta chains form an alternating ring which encloses part of the gamma chain. F(1) is attached to F(0) by a central stalk formed by the gamma and epsilon chains, while a peripheral stalk is formed by the delta and b chains.

The protein resides in the cell inner membrane. In terms of biological role, f(1)F(0) ATP synthase produces ATP from ADP in the presence of a proton or sodium gradient. F-type ATPases consist of two structural domains, F(1) containing the extramembraneous catalytic core and F(0) containing the membrane proton channel, linked together by a central stalk and a peripheral stalk. During catalysis, ATP synthesis in the catalytic domain of F(1) is coupled via a rotary mechanism of the central stalk subunits to proton translocation. Its function is as follows. Component of the F(0) channel, it forms part of the peripheral stalk, linking F(1) to F(0). This Pseudomonas savastanoi pv. phaseolicola (strain 1448A / Race 6) (Pseudomonas syringae pv. phaseolicola (strain 1448A / Race 6)) protein is ATP synthase subunit b.